We begin with the raw amino-acid sequence, 526 residues long: DNA polymerase epsilon subunit B (526 aa).

This sequence belongs to the DNA polymerase epsilon subunit B family. In terms of assembly, subunit of the DNA polymerase II. Interacts with POL2A (via C-terminus).

Its subcellular location is the nucleus. In terms of biological role, as accessory component of DNA polymerase II participates in chromosomal DNA replication. Required for the timing and determination of cell fate during plant embryogenesis and root pole development, by promoting cell cycle and cell type patterning. Necessary for proper shoot (SAM) and root apical meristem (RAM) functions. Is essential to promote the first divisions of the zygote. The protein is DNA polymerase epsilon subunit B of Arabidopsis thaliana (Mouse-ear cress).